Reading from the N-terminus, the 206-residue chain is Guanylate kinase (206 aa).

A Guanylate kinase-like domain is found at 6–184 (GILFILSGPS…AVDKVKTIIK (179 aa)). 13-20 (GPSGVGKG) serves as a coordination point for ATP.

This sequence belongs to the guanylate kinase family.

It is found in the cytoplasm. It carries out the reaction GMP + ATP = GDP + ADP. Functionally, essential for recycling GMP and indirectly, cGMP. This Oceanobacillus iheyensis (strain DSM 14371 / CIP 107618 / JCM 11309 / KCTC 3954 / HTE831) protein is Guanylate kinase.